A 504-amino-acid polypeptide reads, in one-letter code: Maturase K (504 aa).

This sequence belongs to the intron maturase 2 family. MatK subfamily.

The protein localises to the plastid. The protein resides in the chloroplast. Its function is as follows. Usually encoded in the trnK tRNA gene intron. Probably assists in splicing its own and other chloroplast group II introns. This Arabidopsis halleri protein is Maturase K.